We begin with the raw amino-acid sequence, 513 residues long: MQLSPSEISGLIKQRIEKFDNSVELKSEGTIVSVADGIVTIYGLNDVAAGEMIKLPGDVYGLALNLNTDSVGAVVLGDYEHIKEGDKAYCTGRILEVPVGEALLGRVVDALGNPIDGKGEVATDLTSPIEKIAPGVIWRKSVDQALQTGIKSIDSMVPIGRGQRELIIGDRQIGKTAIAVDTIINQKGTGVKCIYVAIGQKASTIANIVRQLEEHGAMEHTIIVAATASDSAALQYIAPYAGCSMGEYFRDRGQDALIVYDDLTKQAWAYRQISLLLRRPPGREAYPGDVFYLHSRLLERAARVNEEYVEKFTNGEVKGKTGSLTALPIIETQAGDISAFVPTNVISITDGQIFLETDLFNSGLRPAINPGNSVSRVGGAAQTKIIKKLGGGIRLALAQYRELEAFSQFASDLDEATRAQLNRGQRVTELLKQKQFSTLSVALMALSLYAADNGYLDNLEVSEVIPFESALHALAETKYSDVIAEINETGKYDADIADKLKIIVEDCKANQAW.

169–176 is an ATP binding site; the sequence is GDRQIGKT.

Belongs to the ATPase alpha/beta chains family. In terms of assembly, F-type ATPases have 2 components, CF(1) - the catalytic core - and CF(0) - the membrane proton channel. CF(1) has five subunits: alpha(3), beta(3), gamma(1), delta(1), epsilon(1). CF(0) has three main subunits: a(1), b(2) and c(9-12). The alpha and beta chains form an alternating ring which encloses part of the gamma chain. CF(1) is attached to CF(0) by a central stalk formed by the gamma and epsilon chains, while a peripheral stalk is formed by the delta and b chains.

Its subcellular location is the cell inner membrane. The catalysed reaction is ATP + H2O + 4 H(+)(in) = ADP + phosphate + 5 H(+)(out). Its function is as follows. Produces ATP from ADP in the presence of a proton gradient across the membrane. The alpha chain is a regulatory subunit. In Francisella tularensis subsp. novicida (strain U112), this protein is ATP synthase subunit alpha.